We begin with the raw amino-acid sequence, 647 residues long: Epithelial sodium channel subunit beta (647 aa).

Residues 1 to 57 (MIHGKMKRLKRYFTRALHRIQKGPGYTYKELLVWFCDNTNTHGPKRIIKEGPKKRVM) are Cytoplasmic-facing. A helical transmembrane segment spans residues 58–78 (WFILTLVFAGLVFWQWGVLIL). Topologically, residues 79 to 552 (TYLSYGVSVS…GGQFGFWMGG (474 aa)) are extracellular. 8 disulfide bridges follow: Cys104–Cys291, Cys215–Cys222, Cys268–Cys275, Cys381–Cys468, Cys406–Cys464, Cys410–Cys460, Cys419–Cys446, and Cys421–Cys435. Residues 553-573 (SVLCIIEFGEIIIDCMWITIL) traverse the membrane as a helical segment. The Cytoplasmic portion of the chain corresponds to 574 to 647 (KFLAWSRNRR…AEPVSSDEEN (74 aa)). The disordered stretch occupies residues 586–647 (RKRPQYSDPP…AEPVSSDEEN (62 aa)).

The protein belongs to the amiloride-sensitive sodium channel (TC 1.A.6) family. SCNN1B subfamily. Component of the heterotrimeric epithelial sodium channel (ENaC) composed of an alpha/SCNN1A, a beta/SCNN1B and a gamma/SCNN1G subunit.

The protein resides in the apical cell membrane. It localises to the cytoplasmic vesicle membrane. The enzyme catalyses Na(+)(in) = Na(+)(out). Originally identified and characterized by its inhibition by the diuretic drug amiloride. This is one of the three pore-forming subunits of the heterotrimeric epithelial sodium channel (ENaC), a critical regulator of sodium balance and fluid homeostasis. ENaC operates in epithelial tissues, where it mediates the electrodiffusion of sodium ions from extracellular fluid through the apical membrane of cells, with water following osmotically. This is Epithelial sodium channel subunit beta (scnn1b-a) from Xenopus laevis (African clawed frog).